Consider the following 292-residue polypeptide: Release factor glutamine methyltransferase (292 aa).

S-adenosyl-L-methionine is bound by residues 126 to 130, Asp-157, Trp-184, and Asn-198; that span reads GTGTG. A substrate-binding site is contributed by 198 to 201; that stretch reads NPPY.

Belongs to the protein N5-glutamine methyltransferase family. PrmC subfamily.

The enzyme catalyses L-glutaminyl-[peptide chain release factor] + S-adenosyl-L-methionine = N(5)-methyl-L-glutaminyl-[peptide chain release factor] + S-adenosyl-L-homocysteine + H(+). Its function is as follows. Methylates the class 1 translation termination release factors RF1/PrfA and RF2/PrfB on the glutamine residue of the universally conserved GGQ motif. This Haemophilus influenzae (strain ATCC 51907 / DSM 11121 / KW20 / Rd) protein is Release factor glutamine methyltransferase.